The following is an 880-amino-acid chain: Tyrosine-protein kinase receptor TYRO3 (880 aa).

An N-terminal signal peptide occupies residues 1–30; that stretch reads MALRRSMGRPGLRPLLLAGLASLLLPGSAA. Ig-like C2-type domains follow at residues 31 to 118 and 129 to 210; these read AGLK…TKIS and PFFT…AIIR. Residues 31–419 are Extracellular-facing; it reads AGLKLMGAPV…QGPPHSRTSW (389 aa). Residues Asn-53, Asn-75, Asn-181, Asn-220, Asn-230, Asn-283, Asn-356, and Asn-370 are each glycosylated (N-linked (GlcNAc...) asparagine). 2 disulfide bridges follow: Cys-54–Cys-107 and Cys-150–Cys-193. Fibronectin type-III domains are found at residues 217–310 and 315–406; these read APFN…TKGL and APQN…SHDH. Residues 420–440 form a helical membrane-spanning segment; that stretch reads VPVVLGVLTALITAAALALIL. Residues 441 to 880 lie on the Cytoplasmic side of the membrane; it reads LRKRRKETRF…QQGLLPHSSC (440 aa). Ser-456 carries the phosphoserine modification. The Protein kinase domain occupies 508–785; sequence FTLGRMLGKG…LENILGHLSV (278 aa). Residues 514–522 and Lys-540 contribute to the ATP site; that span reads LGKGEFGSV. The active-site Proton acceptor is the Asp-645. Phosphotyrosine; by autocatalysis is present on residues Tyr-671, Tyr-675, Tyr-676, and Tyr-794. Disordered regions lie at residues 804-827 and 842-864; these read AENG…GSGM and SPGG…LNEN. Phosphoserine occurs at positions 808 and 859. Residues 852-864 show a composition bias toward polar residues; sequence QLEQQPESPLNEN.

Belongs to the protein kinase superfamily. Tyr protein kinase family. AXL/UFO subfamily. As to quaternary structure, monomer and homodimer. Interacts (via N-terminus) with extracellular ligands TULP1 and GAS6. Interacts with PIK3R1; this interaction increases PI3-kinase activity. Post-translationally, autophosphorylated. As to expression, abundant in the brain and lower levels in other tissues.

The protein localises to the cell membrane. The enzyme catalyses L-tyrosyl-[protein] + ATP = O-phospho-L-tyrosyl-[protein] + ADP + H(+). In terms of biological role, receptor tyrosine kinase that transduces signals from the extracellular matrix into the cytoplasm by binding to several ligands including TULP1 or GAS6. Regulates many physiological processes including cell survival, migration and differentiation. Ligand binding at the cell surface induces dimerization and autophosphorylation of TYRO3 on its intracellular domain that provides docking sites for downstream signaling molecules. Following activation by ligand, interacts with PIK3R1 and thereby enhances PI3-kinase activity. Activates the AKT survival pathway, including nuclear translocation of NF-kappa-B and up-regulation of transcription of NF-kappa-B-regulated genes. TYRO3 signaling plays a role in various processes such as neuron protection from excitotoxic injury, platelet aggregation and cytoskeleton reorganization. Also plays an important role in inhibition of Toll-like receptors (TLRs)-mediated innate immune response by activating STAT1, which selectively induces production of suppressors of cytokine signaling SOCS1 and SOCS3. This is Tyrosine-protein kinase receptor TYRO3 (Tyro3) from Rattus norvegicus (Rat).